We begin with the raw amino-acid sequence, 373 residues long: ATP phosphoribosyltransferase regulatory subunit (373 aa).

The protein belongs to the class-II aminoacyl-tRNA synthetase family. HisZ subfamily. In terms of assembly, heteromultimer composed of HisG and HisZ subunits.

The protein resides in the cytoplasm. The protein operates within amino-acid biosynthesis; L-histidine biosynthesis; L-histidine from 5-phospho-alpha-D-ribose 1-diphosphate: step 1/9. Functionally, required for the first step of histidine biosynthesis. May allow the feedback regulation of ATP phosphoribosyltransferase activity by histidine. In Rhizobium leguminosarum bv. trifolii (strain WSM2304), this protein is ATP phosphoribosyltransferase regulatory subunit.